We begin with the raw amino-acid sequence, 222 residues long: Vesicle-associated membrane protein 724 (222 aa).

At M1–L197 the chain is on the cytoplasmic side. The Longin domain occupies F10–M115. Positions K131 to Q191 constitute a v-SNARE coiled-coil homology domain. Residues V198–F218 form a helical; Anchor for type IV membrane protein membrane-spanning segment. Residues N219 to D222 are Vesicular-facing.

This sequence belongs to the synaptobrevin family. In terms of tissue distribution, expressed in flowers, leaves, stems and roots.

Its subcellular location is the cell membrane. It is found in the early endosome membrane. Involved in the targeting and/or fusion of transport vesicles to their target membrane. The sequence is that of Vesicle-associated membrane protein 724 from Arabidopsis thaliana (Mouse-ear cress).